Consider the following 240-residue polypeptide: uncharacterized protein (240 aa).

The segment at 3–27 (LKCLECDKLLSSIEMAEFHSTKTSH) adopts a C2H2-type zinc-finger fold. Disordered regions lie at residues 21–43 (HSTK…RSPE) and 120–171 (AEIE…RFSI). Residues 120–136 (AEIERDKKRRAAERENK) show a composition bias toward basic and acidic residues. Residues 155–166 (SSSTCTRTPPTS) show a composition bias toward low complexity.

This is an uncharacterized protein from Schizosaccharomyces pombe (strain 972 / ATCC 24843) (Fission yeast).